The following is a 290-amino-acid chain: HTH-type transcriptional activator RhaR (290 aa).

Positions 179-277 (DLIMSALQQS…GMTPRDYRQR (99 aa)) constitute an HTH araC/xylS-type domain. 2 consecutive DNA-binding regions (H-T-H motif) follow at residues 196–217 (ANFC…RQQT) and 244–267 (ISDI…TREA).

Binds DNA as a dimer.

The protein localises to the cytoplasm. Activates expression of the rhaSR operon in response to L-rhamnose. The chain is HTH-type transcriptional activator RhaR from Yersinia pseudotuberculosis serotype O:3 (strain YPIII).